The sequence spans 335 residues: Glyceraldehyde-3-phosphate dehydrogenase (335 aa).

Residues 10–11 (RI), Asp-33, Arg-77, and Ser-119 contribute to the NAD(+) site. D-glyceraldehyde 3-phosphate is bound by residues 150–152 (SCT), Thr-181, 210–211 (TG), and Arg-233. Cys-151 serves as the catalytic Nucleophile. Asn-315 contacts NAD(+).

The protein belongs to the glyceraldehyde-3-phosphate dehydrogenase family. Homotetramer.

It is found in the cytoplasm. The enzyme catalyses D-glyceraldehyde 3-phosphate + phosphate + NAD(+) = (2R)-3-phospho-glyceroyl phosphate + NADH + H(+). Its pathway is carbohydrate degradation; glycolysis; pyruvate from D-glyceraldehyde 3-phosphate: step 1/5. In terms of biological role, catalyzes the oxidative phosphorylation of glyceraldehyde 3-phosphate (G3P) to 1,3-bisphosphoglycerate (BPG) using the cofactor NAD. The first reaction step involves the formation of a hemiacetal intermediate between G3P and a cysteine residue, and this hemiacetal intermediate is then oxidized to a thioester, with concomitant reduction of NAD to NADH. The reduced NADH is then exchanged with the second NAD, and the thioester is attacked by a nucleophilic inorganic phosphate to produce BPG. This is Glyceraldehyde-3-phosphate dehydrogenase (gap) from Chlamydia pneumoniae (Chlamydophila pneumoniae).